A 242-amino-acid polypeptide reads, in one-letter code: Type III pantothenate kinase (242 aa).

ATP is bound at residue 7 to 14 (DLGNSRFK). Substrate-binding positions include Y91 and 98–101 (GVDR). D100 (proton acceptor) is an active-site residue. Residue T121 participates in ATP binding. T171 provides a ligand contact to substrate.

It belongs to the type III pantothenate kinase family. Homodimer. NH4(+) serves as cofactor. It depends on K(+) as a cofactor.

The protein resides in the cytoplasm. It carries out the reaction (R)-pantothenate + ATP = (R)-4'-phosphopantothenate + ADP + H(+). It functions in the pathway cofactor biosynthesis; coenzyme A biosynthesis; CoA from (R)-pantothenate: step 1/5. In terms of biological role, catalyzes the phosphorylation of pantothenate (Pan), the first step in CoA biosynthesis. In Xanthomonas campestris pv. campestris (strain B100), this protein is Type III pantothenate kinase.